Consider the following 542-residue polypeptide: CTP synthase (542 aa).

The amidoligase domain stretch occupies residues 1–265 (MPRYIFITGG…DTEILRCFGI (265 aa)). Ser-13 provides a ligand contact to CTP. Ser-13 provides a ligand contact to UTP. 14-19 (SLGKGL) is a binding site for ATP. Tyr-54 is a binding site for L-glutamine. Asp-71 lines the ATP pocket. Positions 71 and 139 each coordinate Mg(2+). CTP-binding positions include 146–148 (DIE), 186–191 (KTKPTQ), and Lys-222. Residues 186 to 191 (KTKPTQ) and Lys-222 contribute to the UTP site. 238–240 (RDA) is a binding site for ATP. A Glutamine amidotransferase type-1 domain is found at 298–541 (YVGLLDAYKS…IAAALHQSRM (244 aa)). Residue Gly-353 participates in L-glutamine binding. The active-site Nucleophile; for glutamine hydrolysis is the Cys-380. L-glutamine-binding positions include 381-384 (YGMQ), Glu-404, and Arg-469. Active-site residues include His-514 and Glu-516.

The protein belongs to the CTP synthase family. In terms of assembly, homotetramer.

It carries out the reaction UTP + L-glutamine + ATP + H2O = CTP + L-glutamate + ADP + phosphate + 2 H(+). The enzyme catalyses L-glutamine + H2O = L-glutamate + NH4(+). The catalysed reaction is UTP + NH4(+) + ATP = CTP + ADP + phosphate + 2 H(+). It functions in the pathway pyrimidine metabolism; CTP biosynthesis via de novo pathway; CTP from UDP: step 2/2. Its activity is regulated as follows. Allosterically activated by GTP, when glutamine is the substrate; GTP has no effect on the reaction when ammonia is the substrate. The allosteric effector GTP functions by stabilizing the protein conformation that binds the tetrahedral intermediate(s) formed during glutamine hydrolysis. Inhibited by the product CTP, via allosteric rather than competitive inhibition. Catalyzes the ATP-dependent amination of UTP to CTP with either L-glutamine or ammonia as the source of nitrogen. Regulates intracellular CTP levels through interactions with the four ribonucleotide triphosphates. The sequence is that of CTP synthase from Maricaulis maris (strain MCS10) (Caulobacter maris).